A 370-amino-acid polypeptide reads, in one-letter code: D-aspartate oxidase (370 aa).

An N-terminal signal peptide occupies residues 1–18 (MPPRIIILGAGIIGLSTA). 5 residues coordinate FAD: I13, E42, A63, S64, and G68. N-linked (GlcNAc...) asparagine glycosylation is present at N207. The FAD site is built by R308, G338, and Y339.

Belongs to the DAMOX/DASOX family. In terms of assembly, monomer. FAD is required as a cofactor.

The catalysed reaction is D-aspartate + O2 + H2O = oxaloacetate + H2O2 + NH4(+). It catalyses the reaction D-glutamate + O2 + H2O = H2O2 + 2-oxoglutarate + NH4(+). Selectively catalyzes the oxidative deamination of acidic amino acids. Protects the organism from the toxicity of D-amino acids. Enables the organism to utilize D-amino acids as a source of nutrients. This chain is D-aspartate oxidase, found in Talaromyces thermophilus.